Here is a 67-residue protein sequence, read N- to C-terminus: Kappa-conotoxin-like 1 (67 aa).

Positions 1–26 are cleaved as a signal peptide; it reads MMFRLTSVSCFLLVIACLNLFQVVLT. Intrachain disulfides connect Cys29–Cys43, Cys36–Cys48, Cys42–Cys51, and Cys47–Cys55. Isoleucine amide is present on Ile59. Residues 63-67 constitute a propeptide that is removed on maturation; it reads ATFQE.

Belongs to the conotoxin I2 superfamily. As to expression, expressed by the venom duct.

The protein localises to the secreted. In terms of biological role, inhibits the vertebrate voltage-gated potassium channels Kv1.1/KCNA1 and Kv1.3/KCNA3. The chain is Kappa-conotoxin-like 1 from Conus vexillum (Flag cone).